Consider the following 719-residue polypeptide: Fatty acid oxidation complex subunit alpha (719 aa).

Residues 1 to 190 (MVYQGNRITV…KLGLVDATVA (190 aa)) are enoyl-CoA hydratase/isomerase. Residue Asp298 participates in substrate binding. A 3-hydroxyacyl-CoA dehydrogenase region spans residues 313-719 (HEINEAAVLG…AAGETFYATA (407 aa)). NAD(+) contacts are provided by residues Met326, Asp345, 402 to 404 (VVE), Lys409, and Ser431. His452 functions as the For 3-hydroxyacyl-CoA dehydrogenase activity in the catalytic mechanism. NAD(+) is bound at residue Asn455. Asn502 lines the substrate pocket.

In the N-terminal section; belongs to the enoyl-CoA hydratase/isomerase family. The protein in the C-terminal section; belongs to the 3-hydroxyacyl-CoA dehydrogenase family. As to quaternary structure, heterotetramer of two alpha chains (FadB) and two beta chains (FadA).

It carries out the reaction a (3S)-3-hydroxyacyl-CoA + NAD(+) = a 3-oxoacyl-CoA + NADH + H(+). It catalyses the reaction a (3S)-3-hydroxyacyl-CoA = a (2E)-enoyl-CoA + H2O. The catalysed reaction is a 4-saturated-(3S)-3-hydroxyacyl-CoA = a (3E)-enoyl-CoA + H2O. The enzyme catalyses (3S)-3-hydroxybutanoyl-CoA = (3R)-3-hydroxybutanoyl-CoA. It carries out the reaction a (3Z)-enoyl-CoA = a 4-saturated (2E)-enoyl-CoA. It catalyses the reaction a (3E)-enoyl-CoA = a 4-saturated (2E)-enoyl-CoA. It functions in the pathway lipid metabolism; fatty acid beta-oxidation. Involved in the aerobic and anaerobic degradation of long-chain fatty acids via beta-oxidation cycle. Catalyzes the formation of 3-oxoacyl-CoA from enoyl-CoA via L-3-hydroxyacyl-CoA. It can also use D-3-hydroxyacyl-CoA and cis-3-enoyl-CoA as substrate. This is Fatty acid oxidation complex subunit alpha from Psychrobacter arcticus (strain DSM 17307 / VKM B-2377 / 273-4).